Here is a 495-residue protein sequence, read N- to C-terminus: Germacrene A acid 8-beta-hydroxylase (495 aa).

The helical; Signal-anchor for type II membrane protein transmembrane segment at 3-23 threads the bilayer; the sequence is PFTTFSLVASSLILLICWALV. A glycan (N-linked (GlcNAc...) asparagine) is linked at Asn103. Cys433 is a heme binding site.

This sequence belongs to the cytochrome P450 family. It depends on heme as a cofactor. In terms of tissue distribution, mostly expressed in leaves and flowers, and, to a lower extent, in roots and stems.

The protein resides in the membrane. It carries out the reaction germacra-1(10),4,11(13)-trien-12-oate + reduced [NADPH--hemoprotein reductase] + O2 = 8beta-hydroxygermacra-1(10),4,11(13)-trien-12-oate + oxidized [NADPH--hemoprotein reductase] + H2O + H(+). The enzyme catalyses germacra-1(10),4,11(13)-trien-12-oate + reduced [NADPH--hemoprotein reductase] + O2 = 8-epi-inunolide + oxidized [NADPH--hemoprotein reductase] + 2 H2O. The catalysed reaction is germacra-1(10),4,11(13)-trien-12-oate + reduced [NADPH--hemoprotein reductase] + O2 = 8alpha-hydroxygermacra-1(10),4,11(13)-trien-12-oate + oxidized [NADPH--hemoprotein reductase] + H2O + H(+). It functions in the pathway secondary metabolite biosynthesis; terpenoid biosynthesis. Its function is as follows. Involved in the biosynthesis of germacrene-derived sesquiterpene lactones. Hydroxylates germacrene A acid to 8-beta-hydroxy-germacrene A and 8-alpha-hydroxy-germacrene A acids. Unlike 8-alpha-hydroxy-germacrene A acid with is spontaneously converted into inunolide (12, 8-alpha), 8-beta-hydroxy-germacrene A cannot undergo spontaneous lactonization. This chain is Germacrene A acid 8-beta-hydroxylase, found in Inula hupehensis (Inula helianthus-aquatilis subsp. hupehensis).